The primary structure comprises 475 residues: Phosphoglucosamine mutase (475 aa).

The active-site Phosphoserine intermediate is serine 126. Positions 126, 265, 267, and 269 each coordinate Mg(2+). Serine 126 carries the phosphoserine modification.

Belongs to the phosphohexose mutase family. It depends on Mg(2+) as a cofactor. Post-translationally, activated by phosphorylation.

The catalysed reaction is alpha-D-glucosamine 1-phosphate = D-glucosamine 6-phosphate. Its function is as follows. Catalyzes the conversion of glucosamine-6-phosphate to glucosamine-1-phosphate. This Synechococcus sp. (strain ATCC 27144 / PCC 6301 / SAUG 1402/1) (Anacystis nidulans) protein is Phosphoglucosamine mutase.